The chain runs to 309 residues: Prephenate dehydratase (309 aa).

In terms of domain architecture, Prephenate dehydratase spans 3–191 (GIAYLGPEGT…ARTRFVLVGC (189 aa)). The ACT domain maps to 205–282 (SVVLRLDNVP…ADVRYLGSWP (78 aa)).

In terms of assembly, homodimer.

The catalysed reaction is prephenate + H(+) = 3-phenylpyruvate + CO2 + H2O. The protein operates within amino-acid biosynthesis; L-phenylalanine biosynthesis; phenylpyruvate from prephenate: step 1/1. The chain is Prephenate dehydratase (pheA) from Mycolicibacterium gilvum (strain PYR-GCK) (Mycobacterium gilvum (strain PYR-GCK)).